We begin with the raw amino-acid sequence, 329 residues long: Malate dehydrogenase (329 aa).

Position 11 to 17 (Gly11 to Ala17) interacts with NAD(+). Substrate contacts are provided by Arg92 and Arg98. NAD(+)-binding positions include Asn105, Gln112, and Val129–Asn131. Positions 131 and 162 each coordinate substrate. The Proton acceptor role is filled by His187.

This sequence belongs to the LDH/MDH superfamily. MDH type 2 family.

The catalysed reaction is (S)-malate + NAD(+) = oxaloacetate + NADH + H(+). Catalyzes the reversible oxidation of malate to oxaloacetate. This is Malate dehydrogenase from Akkermansia muciniphila (strain ATCC BAA-835 / DSM 22959 / JCM 33894 / BCRC 81048 / CCUG 64013 / CIP 107961 / Muc).